A 250-amino-acid polypeptide reads, in one-letter code: UPF0736 protein BLi01230/BL03322 (250 aa).

This sequence belongs to the UPF0736 family.

In Bacillus licheniformis (strain ATCC 14580 / DSM 13 / JCM 2505 / CCUG 7422 / NBRC 12200 / NCIMB 9375 / NCTC 10341 / NRRL NRS-1264 / Gibson 46), this protein is UPF0736 protein BLi01230/BL03322.